The chain runs to 268 residues: tRNA pseudouridine synthase A (268 aa).

Residue Asp54 is the Nucleophile of the active site. Tyr112 contributes to the substrate binding site.

This sequence belongs to the tRNA pseudouridine synthase TruA family. In terms of assembly, homodimer.

It carries out the reaction uridine(38/39/40) in tRNA = pseudouridine(38/39/40) in tRNA. Formation of pseudouridine at positions 38, 39 and 40 in the anticodon stem and loop of transfer RNAs. This chain is tRNA pseudouridine synthase A, found in Bordetella petrii (strain ATCC BAA-461 / DSM 12804 / CCUG 43448).